We begin with the raw amino-acid sequence, 123 residues long: Large ribosomal subunit protein bL12 (123 aa).

This sequence belongs to the bacterial ribosomal protein bL12 family. In terms of assembly, homodimer. Part of the ribosomal stalk of the 50S ribosomal subunit. Forms a multimeric L10(L12)X complex, where L10 forms an elongated spine to which 2 to 4 L12 dimers bind in a sequential fashion. Binds GTP-bound translation factors.

Its function is as follows. Forms part of the ribosomal stalk which helps the ribosome interact with GTP-bound translation factors. Is thus essential for accurate translation. The polypeptide is Large ribosomal subunit protein bL12 (Chlorobium phaeovibrioides (strain DSM 265 / 1930) (Prosthecochloris vibrioformis (strain DSM 265))).